The following is a 326-amino-acid chain: uncharacterized protein (326 aa).

Y53 serves as the catalytic Proton donor. 215–225 lines the NADP(+) pocket; the sequence is SPLAGGLLGGK. Residues 242–305 are a coiled coil; it reads IEKHRLQLEK…AVEISLDKEI (64 aa).

This sequence belongs to the aldo/keto reductase family. Aldo/keto reductase 2 subfamily.

This is an uncharacterized protein from Bacillus subtilis (strain 168).